The following is a 573-amino-acid chain: 60 kDa heat shock protein, mitochondrial (573 aa).

The transit peptide at 1 to 26 (MLRLPTVFRQMRPVSRVLAPHLTRAY) directs the protein to the mitochondrion. Residue lysine 31 is modified to N6-succinyllysine. Phosphoserine occurs at positions 67 and 70. Position 75 (lysine 75) interacts with ATP. Lysine 75 is subject to N6-acetyllysine. Lysine 82 bears the N6-acetyllysine; alternate mark. An N6-succinyllysine; alternate modification is found at lysine 82. At lysine 87 the chain carries N6-acetyllysine. Tyrosine 90 is subject to Phosphotyrosine. Position 91 is an N6-acetyllysine (lysine 91). ATP is bound at residue 111–115 (DGTTT). At lysine 125 the chain carries N6-acetyllysine; alternate. Lysine 125 carries the post-translational modification N6-succinyllysine; alternate. Lysine 130 carries the post-translational modification N6-acetyllysine. Lysine 133 bears the N6-acetyllysine; alternate mark. Position 133 is an N6-succinyllysine; alternate (lysine 133). The residue at position 133 (lysine 133) is an N6-malonyllysine; alternate. Residue lysine 156 is modified to N6-acetyllysine. 5 positions are modified to N6-acetyllysine; alternate: lysine 191, lysine 202, lysine 205, lysine 218, and lysine 236. N6-succinyllysine; alternate is present on residues lysine 191, lysine 202, lysine 205, lysine 218, and lysine 236. Lysine 249 bears the N6-acetyllysine mark. The residue at position 250 (lysine 250) is an N6-acetyllysine; alternate. Residue lysine 250 is modified to N6-succinyllysine; alternate. N6-acetyllysine occurs at positions 269 and 292. N6-succinyllysine is present on lysine 301. An N6-acetyllysine modification is found at lysine 314. Residue lysine 352 is modified to N6-acetyllysine; alternate. An N6-succinyllysine; alternate modification is found at lysine 352. Lysine 359 and lysine 389 each carry N6-acetyllysine. Position 396 is an N6-acetyllysine; alternate (lysine 396). Lysine 396 carries the post-translational modification N6-succinyllysine; alternate. Phosphoserine is present on serine 410. Glycine 440 provides a ligand contact to ATP. Lysine 469 is modified (N6-acetyllysine). At lysine 481 the chain carries N6-acetyllysine; alternate. Lysine 481 carries the N6-succinyllysine; alternate modification. Serine 488 bears the Phosphoserine mark. Aspartate 520 provides a ligand contact to ATP. A Glycyl lysine isopeptide (Lys-Gly) (interchain with G-Cter in SUMO2) cross-link involves residue lysine 551.

This sequence belongs to the chaperonin (HSP60) family. As to quaternary structure, homoheptamer arranged in a ring structure. The functional units of these chaperonins consist of heptameric rings of the large subunit Hsp60, which function as a back-to-back double ring. Interacts with 2 heptameric Hsp10 rings to form the symmetrical football complex. Interacts with HRAS. Interacts with ATAD3A. Interacts with ETFBKMT and EEF1AKMT3. Interacts with MFHAS1. In terms of assembly, (Microbial infection) Interacts with hepatitis B virus/HBV protein X. (Microbial infection) Interacts with HTLV-1 protein p40tax.

It localises to the mitochondrion matrix. It carries out the reaction ATP + H2O + a folded polypeptide = ADP + phosphate + an unfolded polypeptide.. In terms of biological role, chaperonin implicated in mitochondrial protein import and macromolecular assembly. Together with Hsp10, facilitates the correct folding of imported proteins. May also prevent misfolding and promote the refolding and proper assembly of unfolded polypeptides generated under stress conditions in the mitochondrial matrix. The functional units of these chaperonins consist of heptameric rings of the large subunit Hsp60, which function as a back-to-back double ring. In a cyclic reaction, Hsp60 ring complexes bind one unfolded substrate protein per ring, followed by the binding of ATP and association with 2 heptameric rings of the co-chaperonin Hsp10. This leads to sequestration of the substrate protein in the inner cavity of Hsp60 where, for a certain period of time, it can fold undisturbed by other cell components. Synchronous hydrolysis of ATP in all Hsp60 subunits results in the dissociation of the chaperonin rings and the release of ADP and the folded substrate protein. The sequence is that of 60 kDa heat shock protein, mitochondrial (HSPD1) from Homo sapiens (Human).